Here is a 334-residue protein sequence, read N- to C-terminus: Holliday junction branch migration complex subunit RuvB (334 aa).

Residues 4–184 (ADRLIQPQLQ…FGIPLRLEFY (181 aa)) are large ATPase domain (RuvB-L). ATP-binding positions include Arg-24, Gly-65, Lys-68, Thr-69, Thr-70, 131–133 (EDY), Arg-174, Tyr-184, and Arg-221. Residue Thr-69 participates in Mg(2+) binding. Residues 185–255 (NVKDLSTIVS…VAEHALDLLD (71 aa)) are small ATPAse domain (RuvB-S). Residues 258–334 (GEGFDYMDRK…YLHFGMIKPE (77 aa)) form a head domain (RuvB-H) region. DNA contacts are provided by Arg-294, Arg-313, and Arg-318.

This sequence belongs to the RuvB family. As to quaternary structure, homohexamer. Forms an RuvA(8)-RuvB(12)-Holliday junction (HJ) complex. HJ DNA is sandwiched between 2 RuvA tetramers; dsDNA enters through RuvA and exits via RuvB. An RuvB hexamer assembles on each DNA strand where it exits the tetramer. Each RuvB hexamer is contacted by two RuvA subunits (via domain III) on 2 adjacent RuvB subunits; this complex drives branch migration. In the full resolvosome a probable DNA-RuvA(4)-RuvB(12)-RuvC(2) complex forms which resolves the HJ.

It is found in the cytoplasm. It catalyses the reaction ATP + H2O = ADP + phosphate + H(+). In terms of biological role, the RuvA-RuvB-RuvC complex processes Holliday junction (HJ) DNA during genetic recombination and DNA repair, while the RuvA-RuvB complex plays an important role in the rescue of blocked DNA replication forks via replication fork reversal (RFR). RuvA specifically binds to HJ cruciform DNA, conferring on it an open structure. The RuvB hexamer acts as an ATP-dependent pump, pulling dsDNA into and through the RuvAB complex. RuvB forms 2 homohexamers on either side of HJ DNA bound by 1 or 2 RuvA tetramers; 4 subunits per hexamer contact DNA at a time. Coordinated motions by a converter formed by DNA-disengaged RuvB subunits stimulates ATP hydrolysis and nucleotide exchange. Immobilization of the converter enables RuvB to convert the ATP-contained energy into a lever motion, pulling 2 nucleotides of DNA out of the RuvA tetramer per ATP hydrolyzed, thus driving DNA branch migration. The RuvB motors rotate together with the DNA substrate, which together with the progressing nucleotide cycle form the mechanistic basis for DNA recombination by continuous HJ branch migration. Branch migration allows RuvC to scan DNA until it finds its consensus sequence, where it cleaves and resolves cruciform DNA. In Shewanella sp. (strain MR-7), this protein is Holliday junction branch migration complex subunit RuvB.